Here is a 448-residue protein sequence, read N- to C-terminus: NK1 transcription factor-related protein 1 (448 aa).

Low complexity predominate over residues Met-1 to Pro-13. 3 disordered regions span residues Met-1–Thr-80, Ala-115–Ala-299, and Lys-350–Leu-397. The segment covering Ala-14–Pro-30 has biased composition (pro residues). Composition is skewed to low complexity over residues Pro-62–Pro-79 and Ala-115–Pro-129. A compositionally biased stretch (basic and acidic residues) spans Pro-130–Ala-139. The segment covering Ser-186–Glu-203 has biased composition (acidic residues). Residues Glu-205–Arg-214 show a composition bias toward basic and acidic residues. Composition is skewed to gly residues over residues Gly-215 to Cys-227 and Pro-259 to Gly-270. Over residues Thr-271–Ala-280 the composition is skewed to low complexity. The homeobox DNA-binding region spans Pro-296–Asn-355. A compositionally biased stretch (gly residues) spans Thr-364–Gly-382.

Belongs to the NK-1 homeobox family. Expressed in hemopoietic progenitor cells.

The protein resides in the nucleus. Its function is as follows. May be required for the coordinated crosstalk of factors involved in the maintenance of energy homeostasis, possibly by regulating the transcription of specific factors involved in energy balance. The polypeptide is NK1 transcription factor-related protein 1 (Homo sapiens (Human)).